A 1035-amino-acid polypeptide reads, in one-letter code: Beta-galactosidase (1035 aa).

Positions 109 and 208 each coordinate substrate. Asp-208 is a Na(+) binding site. Glu-424, His-426, and Glu-469 together coordinate Mg(2+). Residues Glu-469 and 545-548 contribute to the substrate site; that span reads EYAH. Glu-469 acts as the Proton donor in catalysis. The Nucleophile role is filled by Glu-545. Asn-605 is a Mg(2+) binding site. The Na(+) site is built by Phe-609 and Asn-612. The substrate site is built by Asn-612 and Trp-1011.

It belongs to the glycosyl hydrolase 2 family. Homotetramer. It depends on Mg(2+) as a cofactor. The cofactor is Na(+).

The catalysed reaction is Hydrolysis of terminal non-reducing beta-D-galactose residues in beta-D-galactosides.. The polypeptide is Beta-galactosidase (Klebsiella pneumoniae (strain 342)).